The following is a 265-amino-acid chain: Glutamate racemase (265 aa).

Substrate is bound by residues 13-14 and 45-46; these read DS and YG. The active-site Proton donor/acceptor is cysteine 77. 78-79 provides a ligand contact to substrate; the sequence is NT. Residue cysteine 185 is the Proton donor/acceptor of the active site. 186-187 lines the substrate pocket; sequence TH.

Belongs to the aspartate/glutamate racemases family.

The enzyme catalyses L-glutamate = D-glutamate. The protein operates within cell wall biogenesis; peptidoglycan biosynthesis. Its function is as follows. Provides the (R)-glutamate required for cell wall biosynthesis. This is Glutamate racemase from Vibrio cholerae serotype O1 (strain ATCC 39315 / El Tor Inaba N16961).